The chain runs to 710 residues: Early transcription factor 82 kDa subunit (710 aa).

It belongs to the poxviridae VETF large subunit family. As to quaternary structure, heterodimer of a 70 kDa and a 82 kDa subunit. Part of the early transcription complex composed of ETF, RAP94/OPG109, and the DNA-directed RNA polymerase.

The protein localises to the virion. In terms of biological role, acts with RNA polymerase to initiate transcription from early gene promoters. Is recruited by the RPO-associated protein of 94 kDa RAP94/OPG109 to form the early transcription complex, which also contains the core RNA polymerase. ETF heterodimer binds to early gene promoters. The chain is Early transcription factor 82 kDa subunit (OPG133) from Bos taurus (Bovine).